The following is a 210-amino-acid chain: IGHVAHGKSTLCKVLTGVDPIKFAAEKVNNITIKLGFANAKIFECKDCAAPKNYFSQKSSSPDQPPCPTCKGTHTQLLRHISIIDCPGHHDYMTTMLSGVAAMDGTLLLISAEQRCPQEQTREHFQAIQATGQKKIIIAQNKIDLVTEQQAQNNYQEIQAFVHGISDINVVPISAIQNLNIDYILKHLVETITPPRRNLKAHPRFTIIRS.

A tr-type G domain is found at 1–196 (IGHVAHGKST…HLVETITPPR (196 aa)). Residues 2–9 (GHVAHGKS) form a G1 region. 5–10 (AHGKST) is a GTP binding site. The interval 30–34 (NITIK) is G2. The G3 stretch occupies residues 85–88 (DCPG). GTP-binding positions include 141–144 (NKID) and 174–176 (SAI). A G4 region spans residues 141–144 (NKID). A G5 region spans residues 174–176 (SAI).

The protein belongs to the TRAFAC class translation factor GTPase superfamily. Classic translation factor GTPase family. EIF2G subfamily. Eukaryotic translation initiation factor 2 eIF2 is a heterotrimeric complex composed of an alpha, a beta and a gamma subunit. The factors eIF-1, eIF-2, eIF-3, TIF5/eIF-5 and methionyl-tRNAi form a multifactor complex (MFC) that may bind to the 40S ribosome.

The protein resides in the cytoplasm. Its subcellular location is the cytosol. The catalysed reaction is GTP + H2O = GDP + phosphate + H(+). Functionally, as a subunit of eukaryotic initiation factor 2 eIF2, involved in the early steps of protein synthesis. In the presence of GTP, eIF-2 forms a ternary complex with initiator tRNA Met-tRNAi and then recruits the 40S ribosomal complex and initiation factors eIF-1, eIF-1A and eIF-3 to form the 43S pre-initiation complex (43S PIC), a step that determines the rate of protein translation. The 43S PIC binds to mRNA and scans downstream to the initiation codon, where it forms a 48S initiation complex by codon-anticodon base pairing. This leads to the displacement of eIF-1 to allow GTPase-activating protein (GAP) eIF-5-mediated hydrolysis of eIF2-bound GTP. Hydrolysis of GTP and release of Pi, which makes GTP hydrolysis irreversible, causes the release of the eIF-2-GDP binary complex from the 40S subunit, an event that is essential for the subsequent joining of the 60S ribosomal subunit to form an elongation-competent 80S ribosome. In order for eIF-2 to recycle and catalyze another round of initiation, the GDP bound to eIF-2 must be exchanged with GTP by way of a reaction catalyzed by GDP-GTP exchange factor (GEF) eIF-2B. In Spironucleus vortens, this protein is Eukaryotic translation initiation factor 2 subunit gamma.